A 497-amino-acid chain; its full sequence is Glycerol kinase (497 aa).

Position 12 (Thr12) interacts with ADP. Thr12, Thr13, and Ser14 together coordinate ATP. Residue Thr12 coordinates sn-glycerol 3-phosphate. Arg16 is an ADP binding site. Sn-glycerol 3-phosphate is bound by residues Arg82, Glu83, Tyr134, and Asp243. Arg82, Glu83, Tyr134, Asp243, and Gln244 together coordinate glycerol. Residues Thr265 and Gly308 each contribute to the ADP site. Residues Thr265, Gly308, Gln312, and Gly411 each coordinate ATP. Residue Gly411 participates in ADP binding.

The protein belongs to the FGGY kinase family.

It carries out the reaction glycerol + ATP = sn-glycerol 3-phosphate + ADP + H(+). The protein operates within polyol metabolism; glycerol degradation via glycerol kinase pathway; sn-glycerol 3-phosphate from glycerol: step 1/1. With respect to regulation, inhibited by fructose 1,6-bisphosphate (FBP). Key enzyme in the regulation of glycerol uptake and metabolism. Catalyzes the phosphorylation of glycerol to yield sn-glycerol 3-phosphate. The protein is Glycerol kinase of Xanthobacter autotrophicus (strain ATCC BAA-1158 / Py2).